The following is a 504-amino-acid chain: Syntaphilin (504 aa).

Residues 1–74 (MAMSLQGSRR…HGIKPPTPEQ (74 aa)) form a disordered region. Composition is skewed to low complexity over residues 7-26 (GSRR…VSVR) and 33-49 (SLSS…SDSS). A coiled-coil region spans residues 79 to 161 (LQQKEVCIRH…VKNNLIDKDK (83 aa)). The interval 191-244 (VAKEEGTGESAGGSPARSLTRSSTYTKLSDPAVCGDRQAGDPSNTPAEDRADSG) is disordered. Phosphoserine occurs at positions 200 and 204. Positions 207-217 (RSLTRSSTYTK) are enriched in polar residues. Thr214 bears the Phosphothreonine mark. A Phosphoserine modification is found at Ser219. A Phosphothreonine modification is found at Thr235. Residues 437-456 (YIVDLLAVVVPAVPTVAWLC) traverse the membrane as a helical segment.

As to quaternary structure, binds to STX1A. Interacts with DNM1; this interaction inhibits the binding of DNM1 to AMPH and DNM1-receptor-mediated endocytosis.

Its subcellular location is the membrane. It is found in the synapse. The protein localises to the synaptosome. Functionally, inhibits SNARE complex formation by absorbing free STX1A. The polypeptide is Syntaphilin (Rattus norvegicus (Rat)).